The sequence spans 285 residues: tRNA pseudouridine synthase A (285 aa).

Asp-69 functions as the Nucleophile in the catalytic mechanism. Tyr-127 lines the substrate pocket.

Belongs to the tRNA pseudouridine synthase TruA family. Homodimer.

The enzyme catalyses uridine(38/39/40) in tRNA = pseudouridine(38/39/40) in tRNA. Its function is as follows. Formation of pseudouridine at positions 38, 39 and 40 in the anticodon stem and loop of transfer RNAs. In Pseudomonas aeruginosa (strain ATCC 15692 / DSM 22644 / CIP 104116 / JCM 14847 / LMG 12228 / 1C / PRS 101 / PAO1), this protein is tRNA pseudouridine synthase A.